Here is a 164-residue protein sequence, read N- to C-terminus: uncharacterized protein (164 aa).

Positions 144 to 164 (GFISPEKEHESEDMTSQSLVA) are disordered.

This is an uncharacterized protein from Synechocystis sp. (strain ATCC 27184 / PCC 6803 / Kazusa).